Here is a 442-residue protein sequence, read N- to C-terminus: 3-phosphoshikimate 1-carboxyvinyltransferase (442 aa).

The segment covering 1 to 11 (MQVSRPLTVSA) has biased composition (polar residues). Positions 1-25 (MQVSRPLTVSASPKGLSGRTRVPGD) are disordered. Residues lysine 26, serine 27, and arginine 31 each contribute to the 3-phosphoshikimate site. Lysine 26 contributes to the phosphoenolpyruvate binding site. 2 residues coordinate phosphoenolpyruvate: glycine 98 and arginine 126. 3-phosphoshikimate contacts are provided by serine 171, glutamine 173, aspartate 324, and lysine 351. Glutamine 173 is a binding site for phosphoenolpyruvate. Aspartate 324 acts as the Proton acceptor in catalysis. Residues arginine 355 and arginine 398 each contribute to the phosphoenolpyruvate site.

The protein belongs to the EPSP synthase family. In terms of assembly, monomer.

The protein localises to the cytoplasm. The enzyme catalyses 3-phosphoshikimate + phosphoenolpyruvate = 5-O-(1-carboxyvinyl)-3-phosphoshikimate + phosphate. Its pathway is metabolic intermediate biosynthesis; chorismate biosynthesis; chorismate from D-erythrose 4-phosphate and phosphoenolpyruvate: step 6/7. Functionally, catalyzes the transfer of the enolpyruvyl moiety of phosphoenolpyruvate (PEP) to the 5-hydroxyl of shikimate-3-phosphate (S3P) to produce enolpyruvyl shikimate-3-phosphate and inorganic phosphate. The polypeptide is 3-phosphoshikimate 1-carboxyvinyltransferase (Gluconobacter oxydans (strain 621H) (Gluconobacter suboxydans)).